Reading from the N-terminus, the 250-residue chain is Methionine aminopeptidase (250 aa).

Position 77 (His-77) interacts with substrate. A divalent metal cation contacts are provided by Asp-95, Asp-106, and His-169. His-176 contributes to the substrate binding site. Glu-202 and Glu-233 together coordinate a divalent metal cation.

Belongs to the peptidase M24A family. Methionine aminopeptidase type 1 subfamily. In terms of assembly, monomer. The cofactor is Co(2+). Requires Zn(2+) as cofactor. Mn(2+) is required as a cofactor. It depends on Fe(2+) as a cofactor.

The catalysed reaction is Release of N-terminal amino acids, preferentially methionine, from peptides and arylamides.. In terms of biological role, removes the N-terminal methionine from nascent proteins. The N-terminal methionine is often cleaved when the second residue in the primary sequence is small and uncharged (Met-Ala-, Cys, Gly, Pro, Ser, Thr, or Val). Requires deformylation of the N(alpha)-formylated initiator methionine before it can be hydrolyzed. This Clostridium acetobutylicum (strain ATCC 824 / DSM 792 / JCM 1419 / IAM 19013 / LMG 5710 / NBRC 13948 / NRRL B-527 / VKM B-1787 / 2291 / W) protein is Methionine aminopeptidase.